The primary structure comprises 1749 residues: Kinase non-catalytic C-lobe domain-containing protein 1 (1749 aa).

Positions 37 to 217 (VSLADILSLR…QDVSESSWRE (181 aa)) constitute a KIND 1 domain. 2 disordered regions span residues 210 to 275 (VSES…SHSR) and 361 to 435 (CRLW…ARQL). Basic and acidic residues-rich tracts occupy residues 363–373 (LWPEQEPEHQL) and 410–430 (ADPR…RIPE). Residues 444–608 (VSLQDLLSQL…RASICQVYQE (165 aa)) enclose the KIND 2 domain. Disordered stretches follow at residues 689-871 (ARDQ…RPAD) and 962-1061 (QASP…GGAS). Residues 702–717 (ERGGQREGEGEEKLSL) show a composition bias toward basic and acidic residues. 2 stretches are compositionally biased toward low complexity: residues 739 to 748 (QGAAPEPLGA) and 766 to 779 (PANQ…AAPG). Basic residues predominate over residues 823–833 (HGPRHPPKPPR). Over residues 853-871 (GERDDQSPDSVPERPRPAD) the composition is skewed to basic and acidic residues. Phosphoserine is present on serine 964. Low complexity predominate over residues 980–990 (SQSPRSPSSKR). Polar residues predominate over residues 1005-1019 (RTSSRAPCSPTSVSD). Basic and acidic residues predominate over residues 1040–1056 (VKAERAQQPEAGEDRRP). Residues 1133–1190 (QQLMMEKRNYRKTLKFYQKLLQKEKRNKGSDVKTMLSKLKGQLEEMKSRVQFLSLVKK) are a coiled coil. The N-terminal Ras-GEF domain maps to 1246 to 1371 (KARILQAGTP…HLLGLLEVGM (126 aa)). Positions 1468–1719 (STHQLFSQLT…SGADISTLAA (252 aa)) constitute a Ras-GEF domain.

In terms of assembly, interacts (via KIND2) with MAP2; the interaction enhances MAP2 phosphorylation and localizes KNDC1 to dendrites. In terms of tissue distribution, expressed specifically in the cerebral cortex.

Its subcellular location is the cell projection. It localises to the dendrite. The protein resides in the perikaryon. In terms of biological role, RAS-Guanine nucleotide exchange factor (GEF) that controls the negative regulation of neuronal dendrite growth by mediating a signaling pathway linking RAS and MAP2. May be involved in cellular senescence. The chain is Kinase non-catalytic C-lobe domain-containing protein 1 from Homo sapiens (Human).